Consider the following 94-residue polypeptide: Large ribosomal subunit protein uL23c (94 aa).

This sequence belongs to the universal ribosomal protein uL23 family. In terms of assembly, part of the 50S ribosomal subunit.

It is found in the plastid. It localises to the chloroplast. Its function is as follows. Binds to 23S rRNA. The chain is Large ribosomal subunit protein uL23c (rpl23) from Tupiella akineta (Green alga).